Consider the following 482-residue polypeptide: tRNA sulfurtransferase (482 aa).

The region spanning 61-165 is the THUMP domain; the sequence is LTIRDALTRI…DDRLLLIKGR (105 aa). Residues 183 to 184, lysine 265, glycine 287, and glutamine 296 contribute to the ATP site; that span reads LI. The cysteines at positions 344 and 456 are disulfide-linked. The Rhodanese domain occupies 404–482; it reads CGPNDVILDI…GFNNVKVYRP (79 aa). The Cysteine persulfide intermediate role is filled by cysteine 456.

Belongs to the ThiI family.

The protein localises to the cytoplasm. It catalyses the reaction [ThiI sulfur-carrier protein]-S-sulfanyl-L-cysteine + a uridine in tRNA + 2 reduced [2Fe-2S]-[ferredoxin] + ATP + H(+) = [ThiI sulfur-carrier protein]-L-cysteine + a 4-thiouridine in tRNA + 2 oxidized [2Fe-2S]-[ferredoxin] + AMP + diphosphate. The enzyme catalyses [ThiS sulfur-carrier protein]-C-terminal Gly-Gly-AMP + S-sulfanyl-L-cysteinyl-[cysteine desulfurase] + AH2 = [ThiS sulfur-carrier protein]-C-terminal-Gly-aminoethanethioate + L-cysteinyl-[cysteine desulfurase] + A + AMP + 2 H(+). Its pathway is cofactor biosynthesis; thiamine diphosphate biosynthesis. Catalyzes the ATP-dependent transfer of a sulfur to tRNA to produce 4-thiouridine in position 8 of tRNAs, which functions as a near-UV photosensor. Also catalyzes the transfer of sulfur to the sulfur carrier protein ThiS, forming ThiS-thiocarboxylate. This is a step in the synthesis of thiazole, in the thiamine biosynthesis pathway. The sulfur is donated as persulfide by IscS. The polypeptide is tRNA sulfurtransferase (Shigella dysenteriae serotype 1 (strain Sd197)).